Reading from the N-terminus, the 265-residue chain is Probable U2 small nuclear ribonucleoprotein A' (265 aa).

LRR repeat units follow at residues 20-41, 43-64, 65-86, and 89-110; these read RERE…GATL, QFDT…PHLP, RLKC…LEEA, and NLGS…EPLV. An LRRCT domain is found at 123 to 161; that stretch reads NPVSTKPNYREYMAYKFPQLRLLDFRKIKQKDRQAAQEF.

It belongs to the U2 small nuclear ribonucleoprotein A family. In terms of assembly, interacts with the SMN complex.

The protein resides in the nucleus. Involved in pre-mRNA splicing as component of the spliceosome. Associated with sn-RNP U2, where it contributes to the binding of stem loop IV of U2 snRNA. In the germ line, has a role in oogenesis, by regulating spermatogenesis and nurse cell nuclei chromatin decondensation and dispersal, probably by regulating the splicing of proteins necessary for germline differentiation such as the meiotic protein mei-P26. The sequence is that of Probable U2 small nuclear ribonucleoprotein A' (U2A) from Drosophila melanogaster (Fruit fly).